The following is a 352-amino-acid chain: MNVAVAVSGGTDSLYTLATLREAFGNHHVFALHARFKEQITNDPVPALKEQCHNLNVPLHVVDLHKEFNELIIRPFIKAYADGKTPNPCVHCNAKVKFGLLQKKAQELGANQIATGHYVSLIDHDLYGKALKCGADSTKDQSYFLALTPREQLQTAIFPLGTLRKTEVRERLQKMGLEVPLPKESQEICFVPNDDYRKFLQSSDVDLLSEGRMVMLDGTLVGKHKGLWKYTEGQRRGLGVSWSEPLYVAHKNHSCNELVLGTAKDILVDTCTAQDINFLVPQDNWPKELFVRTRYRQQAVPADIQFVTNTSSSKKITIHFHSPQLPAAPGQLAAIFDKSGYVLAGGLITNDL.

6–13 lines the ATP pocket; sequence AVSGGTDS. The active-site Nucleophile is the Cys-92. Cys-92 and Cys-189 are oxidised to a cystine. Gly-116 is a binding site for ATP. The interval 139–141 is interaction with tRNA; sequence KDQ. Cys-189 functions as the Cysteine persulfide intermediate in the catalytic mechanism. Residues 294-295 form an interaction with tRNA region; the sequence is RY.

Belongs to the MnmA/TRMU family.

The protein localises to the cytoplasm. The catalysed reaction is S-sulfanyl-L-cysteinyl-[protein] + uridine(34) in tRNA + AH2 + ATP = 2-thiouridine(34) in tRNA + L-cysteinyl-[protein] + A + AMP + diphosphate + H(+). Functionally, catalyzes the 2-thiolation of uridine at the wobble position (U34) of tRNA, leading to the formation of s(2)U34. The protein is tRNA-specific 2-thiouridylase MnmA of Lawsonia intracellularis (strain PHE/MN1-00).